A 209-amino-acid polypeptide reads, in one-letter code: Ubiquitin-conjugating enzyme E2 S (209 aa).

Positions 14–160 constitute a UBC core domain; sequence QTIRQVMREL…ARMMTEIHAQ (147 aa). Cys-98 (glycyl thioester intermediate) is an active-site residue. Residues 162-209 form a disordered region; that stretch reads AKCGAGAHGDDKDDDGPSTKKHAGLDKKLQDKKKEKLLKEKKRMLKRL. Over residues 169–199 the composition is skewed to basic and acidic residues; the sequence is HGDDKDDDGPSTKKHAGLDKKLQDKKKEKLL. The segment covering 200-209 has biased composition (basic residues); the sequence is KEKKRMLKRL.

This sequence belongs to the ubiquitin-conjugating enzyme family.

It carries out the reaction S-ubiquitinyl-[E1 ubiquitin-activating enzyme]-L-cysteine + [E2 ubiquitin-conjugating enzyme]-L-cysteine = [E1 ubiquitin-activating enzyme]-L-cysteine + S-ubiquitinyl-[E2 ubiquitin-conjugating enzyme]-L-cysteine.. Its pathway is protein modification; protein ubiquitination. In terms of biological role, catalyzes the covalent attachment of ubiquitin to other proteins. Acts as an essential factor of the anaphase promoting complex/cyclosome (APC/C), a cell cycle-regulated ubiquitin ligase that controls progression through mitosis. Acts by specifically elongating polyubiquitin chains initiated by the E2 enzyme vih/UbcH10 on APC/C substrates, enhancing the degradation of APC/C substrates by the proteasome and promoting mitotic exit. The polypeptide is Ubiquitin-conjugating enzyme E2 S (Drosophila erecta (Fruit fly)).